The chain runs to 256 residues: 4-hydroxy-tetrahydrodipicolinate reductase (256 aa).

NAD(+)-binding positions include 12–17, D39, 86–88, and 110–113; these read GINGRV, GTT, and AANY. The Proton donor/acceptor role is filled by H144. H145 contacts (S)-2,3,4,5-tetrahydrodipicolinate. Catalysis depends on K148, which acts as the Proton donor. 154-155 provides a ligand contact to (S)-2,3,4,5-tetrahydrodipicolinate; sequence GT.

Belongs to the DapB family.

It is found in the cytoplasm. It catalyses the reaction (S)-2,3,4,5-tetrahydrodipicolinate + NAD(+) + H2O = (2S,4S)-4-hydroxy-2,3,4,5-tetrahydrodipicolinate + NADH + H(+). The enzyme catalyses (S)-2,3,4,5-tetrahydrodipicolinate + NADP(+) + H2O = (2S,4S)-4-hydroxy-2,3,4,5-tetrahydrodipicolinate + NADPH + H(+). It functions in the pathway amino-acid biosynthesis; L-lysine biosynthesis via DAP pathway; (S)-tetrahydrodipicolinate from L-aspartate: step 4/4. In terms of biological role, catalyzes the conversion of 4-hydroxy-tetrahydrodipicolinate (HTPA) to tetrahydrodipicolinate. The sequence is that of 4-hydroxy-tetrahydrodipicolinate reductase from Gluconacetobacter diazotrophicus (strain ATCC 49037 / DSM 5601 / CCUG 37298 / CIP 103539 / LMG 7603 / PAl5).